The chain runs to 292 residues: Bis(5'-nucleosyl)-tetraphosphatase, symmetrical (292 aa).

Residues 271–292 (LSIEHPRHTHTPRRQAKKHSKK) form a disordered region. A compositionally biased stretch (basic residues) spans 277–292 (RHTHTPRRQAKKHSKK).

The protein belongs to the Ap4A hydrolase family.

It catalyses the reaction P(1),P(4)-bis(5'-adenosyl) tetraphosphate + H2O = 2 ADP + 2 H(+). Its function is as follows. Hydrolyzes diadenosine 5',5'''-P1,P4-tetraphosphate to yield ADP. In Xylella fastidiosa (strain 9a5c), this protein is Bis(5'-nucleosyl)-tetraphosphatase, symmetrical (apaH).